The following is a 218-amino-acid chain: Thiopurine S-methyltransferase (218 aa).

4 residues coordinate S-adenosyl-L-methionine: W10, L45, E66, and R123.

The protein belongs to the class I-like SAM-binding methyltransferase superfamily. TPMT family.

It localises to the cytoplasm. It carries out the reaction S-adenosyl-L-methionine + a thiopurine = S-adenosyl-L-homocysteine + a thiopurine S-methylether.. The protein is Thiopurine S-methyltransferase of Shewanella baltica (strain OS223).